The primary structure comprises 532 residues: MRTLEAFALSLFLVFLVKWVNSDSSSSPSKDQFLSCMSTHSDSSFINPKSFIHKPDSRVYTDFSQSLISQNYRFLTLNFTSQKPILIVTPRTDTEIQRSLLCSRKLGVKVRTKSGGHDYEGLSYLSLHSPFIILDLVNVRSIEINLADETAWVGAGATIGELYYKIAKSSKIHGFPAGTCPSVGVGGHFSGGGFGAMMRKHGLAADNVVDARFVDANGRIYNSRREMGEDLFWAIRGGGAASFGVVLSWKVKLVRVPEKVTCFRRNLPLTQNMTKIVHRWQQIAAELDDNLFIRVIVSISGGSVQTTFQANYLGGIDKLIPLMNQKFPELGLTFQDCSEMTWIDSIMYFNWKKGQPLETLLDRGQRYNDLYFKAKSDFVKNPIPEIGLEGIWTRFHEVESPIMIMEPLGGKMYEIGETETPFPHRRGNLYNIQYMVKWRLKDIGVMEKHVTWMRLLYRYMRVYVSASPRGAYLNYRDLDLGMNRGVNTSFEDAKLWGFRYFGSNFKRLAIVKGKIDPTNFFRNEQSVPPLIV.

Positions 1–22 (MRTLEAFALSLFLVFLVKWVNS) are cleaved as a signal peptide. An intrachain disulfide couples C36 to C102. N-linked (GlcNAc...) asparagine glycosylation is present at N78. An FAD-binding PCMH-type domain is found at 80-256 (TSQKPILIVT…LSWKVKLVRV (177 aa)). A cross-link (6-(S-cysteinyl)-8alpha-(pros-histidyl)-FAD (His-Cys)) is located at residues 117-180 (HDYEGLSYLS…KIHGFPAGTC (64 aa)). N272 and N487 each carry an N-linked (GlcNAc...) asparagine glycan.

It belongs to the oxygen-dependent FAD-linked oxidoreductase family. Requires FAD as cofactor. The FAD cofactor is bound via a bicovalent 6-S-cysteinyl, 8alpha-N1-histidyl FAD linkage. In terms of tissue distribution, accumulates in cell walls of etiolated hypocotyls.

The protein resides in the secreted. It localises to the cell wall. In Arabidopsis thaliana (Mouse-ear cress), this protein is Berberine bridge enzyme-like 23.